The sequence spans 205 residues: Ribosomal RNA small subunit methyltransferase J (205 aa).

S-adenosyl-L-methionine is bound by residues 56–57, 72–73, and Asp-124; these read RD and ER.

It belongs to the methyltransferase superfamily. RsmJ family.

The protein localises to the cytoplasm. It catalyses the reaction guanosine(1516) in 16S rRNA + S-adenosyl-L-methionine = N(2)-methylguanosine(1516) in 16S rRNA + S-adenosyl-L-homocysteine + H(+). Specifically methylates the guanosine in position 1516 of 16S rRNA. In Brucella anthropi (strain ATCC 49188 / DSM 6882 / CCUG 24695 / JCM 21032 / LMG 3331 / NBRC 15819 / NCTC 12168 / Alc 37) (Ochrobactrum anthropi), this protein is Ribosomal RNA small subunit methyltransferase J.